We begin with the raw amino-acid sequence, 215 residues long: Peroxiredoxin-5, mitochondrial (215 aa).

A mitochondrion-targeting transit peptide spans Met-1–Ala-53. One can recognise a Thioredoxin domain in the interval Ile-57–Leu-215. An N6-acetyllysine modification is found at Lys-76. Position 84 is an N6-acetyllysine; alternate (Lys-84). An N6-succinyllysine; alternate modification is found at Lys-84. Catalysis depends on Cys-101, which acts as the Cysteine sulfenic acid (-SOH) intermediate. A lipid anchor (S-palmitoyl cysteine) is attached at Cys-101. Cysteines 101 and 205 form a disulfide. Lys-117 bears the N6-succinyllysine mark. Ser-172 and Ser-183 each carry phosphoserine. Positions Ser-213–Leu-215 match the Microbody targeting signal motif.

The protein belongs to the peroxiredoxin family. Prx5 subfamily. In terms of assembly, monomer. S-palmitoylated. Palmitoylation occurs on the active site, inhibiting its reactivity; therefore PRDX5 palmitoylation status determines its antioxidant capacity. In terms of processing, S-palmitoylated. Depalmitoylated by ABHD10.

It is found in the mitochondrion. The protein resides in the cytoplasm. It localises to the peroxisome matrix. The enzyme catalyses a hydroperoxide + [thioredoxin]-dithiol = an alcohol + [thioredoxin]-disulfide + H2O. In terms of biological role, thiol-specific peroxidase that catalyzes the reduction of hydrogen peroxide and organic hydroperoxides to water and alcohols, respectively. Plays a role in cell protection against oxidative stress by detoxifying peroxides and as sensor of hydrogen peroxide-mediated signaling events. The protein is Peroxiredoxin-5, mitochondrial (PRDX5) of Chlorocebus aethiops (Green monkey).